The sequence spans 313 residues: Acetyl-coenzyme A carboxylase carboxyl transferase subunit alpha (313 aa).

In terms of domain architecture, CoA carboxyltransferase C-terminal spans 30 to 291 (DLDREISDLE…KMALLQELAF (262 aa)).

The protein belongs to the AccA family. As to quaternary structure, acetyl-CoA carboxylase is a heterohexamer composed of biotin carboxyl carrier protein (AccB), biotin carboxylase (AccC) and two subunits each of ACCase subunit alpha (AccA) and ACCase subunit beta (AccD).

The protein resides in the cytoplasm. The enzyme catalyses N(6)-carboxybiotinyl-L-lysyl-[protein] + acetyl-CoA = N(6)-biotinyl-L-lysyl-[protein] + malonyl-CoA. It participates in lipid metabolism; malonyl-CoA biosynthesis; malonyl-CoA from acetyl-CoA: step 1/1. In terms of biological role, component of the acetyl coenzyme A carboxylase (ACC) complex. First, biotin carboxylase catalyzes the carboxylation of biotin on its carrier protein (BCCP) and then the CO(2) group is transferred by the carboxyltransferase to acetyl-CoA to form malonyl-CoA. The sequence is that of Acetyl-coenzyme A carboxylase carboxyl transferase subunit alpha from Zymomonas mobilis subsp. mobilis (strain ATCC 31821 / ZM4 / CP4).